Consider the following 578-residue polypeptide: Arginine--tRNA ligase (578 aa).

The 'HIGH' region motif lies at 127 to 137 (PNLAKEMHVGH).

It belongs to the class-I aminoacyl-tRNA synthetase family. As to quaternary structure, monomer.

It localises to the cytoplasm. The catalysed reaction is tRNA(Arg) + L-arginine + ATP = L-arginyl-tRNA(Arg) + AMP + diphosphate. The protein is Arginine--tRNA ligase of Pseudomonas fluorescens (strain Pf0-1).